The chain runs to 80 residues: Late expression factor 10 (80 aa).

It belongs to the baculoviridae LEF-10 family.

Functionally, involved in late/very late gene activation. This Orgyia pseudotsugata multicapsid polyhedrosis virus (OpMNPV) protein is Late expression factor 10 (LEF-10).